A 300-amino-acid chain; its full sequence is 4-hydroxy-tetrahydrodipicolinate synthase (300 aa).

Residue Thr-54 participates in pyruvate binding. Tyr-142 acts as the Proton donor/acceptor in catalysis. Catalysis depends on Lys-170, which acts as the Schiff-base intermediate with substrate. Residue Ile-212 coordinates pyruvate.

This sequence belongs to the DapA family. In terms of assembly, homotetramer; dimer of dimers.

The protein localises to the cytoplasm. The catalysed reaction is L-aspartate 4-semialdehyde + pyruvate = (2S,4S)-4-hydroxy-2,3,4,5-tetrahydrodipicolinate + H2O + H(+). Its pathway is amino-acid biosynthesis; L-lysine biosynthesis via DAP pathway; (S)-tetrahydrodipicolinate from L-aspartate: step 3/4. In terms of biological role, catalyzes the condensation of (S)-aspartate-beta-semialdehyde [(S)-ASA] and pyruvate to 4-hydroxy-tetrahydrodipicolinate (HTPA). This is 4-hydroxy-tetrahydrodipicolinate synthase from Halorhodospira halophila (strain DSM 244 / SL1) (Ectothiorhodospira halophila (strain DSM 244 / SL1)).